Here is a 485-residue protein sequence, read N- to C-terminus: Glutamyl-tRNA(Gln) amidotransferase subunit A 1 (485 aa).

Catalysis depends on charge relay system residues K79 and S154. S178 functions as the Acyl-ester intermediate in the catalytic mechanism.

The protein belongs to the amidase family. GatA subfamily. In terms of assembly, heterotrimer of A, B and C subunits.

The catalysed reaction is L-glutamyl-tRNA(Gln) + L-glutamine + ATP + H2O = L-glutaminyl-tRNA(Gln) + L-glutamate + ADP + phosphate + H(+). In terms of biological role, allows the formation of correctly charged Gln-tRNA(Gln) through the transamidation of misacylated Glu-tRNA(Gln) in organisms which lack glutaminyl-tRNA synthetase. The reaction takes place in the presence of glutamine and ATP through an activated gamma-phospho-Glu-tRNA(Gln). This chain is Glutamyl-tRNA(Gln) amidotransferase subunit A 1 (gatA1), found in Clostridium acetobutylicum (strain ATCC 824 / DSM 792 / JCM 1419 / IAM 19013 / LMG 5710 / NBRC 13948 / NRRL B-527 / VKM B-1787 / 2291 / W).